Here is a 473-residue protein sequence, read N- to C-terminus: Gamma-aminobutyric acid receptor subunit beta-3 (473 aa).

The signal sequence occupies residues 1 to 25 (MWGLAGGRLFGIFSAPVLVAVVCCA). The Extracellular portion of the chain corresponds to 26–246 (QSVNDPGNMS…FRLKRNIGYF (221 aa)). 2 N-linked (GlcNAc...) asparagine glycosylation sites follow: asparagine 33 and asparagine 105. Residue 120 to 122 (DTY) coordinates benzamidine. Tyrosine 122 lines the 4-aminobutanoate pocket. Tyrosine 122 provides a ligand contact to histamine. A disulfide bridge links cysteine 161 with cysteine 175. A glycan (N-linked (GlcNAc...) asparagine) is linked at asparagine 174. The 4-aminobutanoate site is built by glutamate 180 and tyrosine 182. Residues 180 to 182 (ESY) and phenylalanine 225 each bind benzamidine. 181-182 (SY) is a histamine binding site. Threonine 227 serves as a coordination point for 4-aminobutanoate. Threonine 227 serves as a coordination point for histamine. The helical transmembrane segment at 247-267 (ILQTYMPSILITILSWVSFWI) threads the bilayer. At 268–271 (NYDA) the chain is on the cytoplasmic side. A helical transmembrane segment spans residues 272–292 (SAARVALGITTVLTMTTINTH). Over 293 to 304 (LRETLPKIPYVK) the chain is Extracellular. Residues 305-328 (AIDMYLMGCFVFVFLALLEYAFVN) traverse the membrane as a helical segment. Topologically, residues 329–447 (YIFFGRGPQR…KIPDLTDVNA (119 aa)) are cytoplasmic. Residues 448–470 (IDRWSRIVFPFTFSLFNLVYWLY) traverse the membrane as a helical segment. Topologically, residues 471–473 (YVN) are extracellular.

It belongs to the ligand-gated ion channel (TC 1.A.9) family. Gamma-aminobutyric acid receptor (TC 1.A.9.5) subfamily. GABRB3 sub-subfamily. Heteropentamer, formed by a combination of alpha (GABRA1-6), beta (GABRB1-3), gamma (GABRG1-3), delta (GABRD), epsilon (GABRE), rho (GABRR1-3), pi (GABRP) and theta (GABRQ) chains, each subunit exhibiting distinct physiological and pharmacological properties. Can form functional homopentamers (in vitro). Interacts with UBQLN1. May interact with KIF21B. Identified in a complex of 720 kDa composed of LHFPL4, NLGN2, GABRA1, GABRB2, GABRG2 and GABRB3. Interacts with LHFPL4. Interacts with GIT1; this interaction is required for synaptic GABRB3 surface stability and inhibitory synapse strength.

It localises to the postsynaptic cell membrane. The protein resides in the cell membrane. The protein localises to the cytoplasmic vesicle membrane. The catalysed reaction is chloride(in) = chloride(out). With respect to regulation, potentiated by histamine. Functionally, beta subunit of the heteropentameric ligand-gated chloride channel gated by gamma-aminobutyric acid (GABA), a major inhibitory neurotransmitter in the brain. GABA-gated chloride channels, also named GABA(A) receptors (GABAAR), consist of five subunits arranged around a central pore and contain GABA active binding site(s) located at the alpha and beta subunit interface(s). GABAARs containing beta-3/GABRB3 subunit are found at both synaptic and extrasynaptic sites. When activated by GABA, GABAARs selectively allow the flow of chloride anions across the cell membrane down their electrochemical gradient. Chloride influx into the postsynaptic neuron following GABAAR opening decreases the neuron ability to generate a new action potential, thereby reducing nerve transmission. GABAARs containing alpha-1 and beta-3 subunits exhibit synaptogenic activity; the gamma-2 subunit being necessary but not sufficient to induce rapid synaptic contacts formation. Extrasynaptic beta-3 receptors contribute to the tonic GABAergic inhibition. GABAARs containing alpha-1, beta-3 and epsilon subunits may also permit spontaneous chloride channel activity while preserving the structural information required for GABA-gated openings. Beta-containing GABAARs can simultaneously bind GABA and histamine where histamine binds at the interface of two neighboring beta subunits, which may be involved in the regulation of sleep and wakefulness. Plays an important role in somatosensation and in the production of antinociception. This Homo sapiens (Human) protein is Gamma-aminobutyric acid receptor subunit beta-3.